The primary structure comprises 255 residues: Type III pantothenate kinase (255 aa).

6-13 (DVGNTNTV) serves as a coordination point for ATP. Residues Tyr100 and 107-110 (GADR) each bind substrate. The active-site Proton acceptor is the Asp109. A K(+)-binding site is contributed by Asp129. ATP is bound at residue Thr132. Residue Thr184 participates in substrate binding.

Belongs to the type III pantothenate kinase family. Homodimer. The cofactor is NH4(+). K(+) serves as cofactor.

The protein resides in the cytoplasm. It catalyses the reaction (R)-pantothenate + ATP = (R)-4'-phosphopantothenate + ADP + H(+). It participates in cofactor biosynthesis; coenzyme A biosynthesis; CoA from (R)-pantothenate: step 1/5. Its function is as follows. Catalyzes the phosphorylation of pantothenate (Pan), the first step in CoA biosynthesis. The sequence is that of Type III pantothenate kinase from Syntrophomonas wolfei subsp. wolfei (strain DSM 2245B / Goettingen).